We begin with the raw amino-acid sequence, 428 residues long: Aspartate--tRNA(Asp) ligase (428 aa).

An L-aspartate-binding site is contributed by glutamate 170. The segment at 192 to 195 is aspartate; sequence QLYK. Arginine 213 serves as a coordination point for L-aspartate. ATP contacts are provided by residues 213 to 215 and glutamate 351; that span reads RAE. Mg(2+) is bound by residues glutamate 351 and serine 354. 2 residues coordinate L-aspartate: serine 354 and arginine 358. Position 399–402 (399–402) interacts with ATP; the sequence is GFNR.

The protein belongs to the class-II aminoacyl-tRNA synthetase family. Type 2 subfamily. Homodimer. It depends on Mg(2+) as a cofactor.

It localises to the cytoplasm. It catalyses the reaction tRNA(Asp) + L-aspartate + ATP = L-aspartyl-tRNA(Asp) + AMP + diphosphate. In terms of biological role, catalyzes the attachment of L-aspartate to tRNA(Asp) in a two-step reaction: L-aspartate is first activated by ATP to form Asp-AMP and then transferred to the acceptor end of tRNA(Asp). The chain is Aspartate--tRNA(Asp) ligase from Pyrobaculum aerophilum (strain ATCC 51768 / DSM 7523 / JCM 9630 / CIP 104966 / NBRC 100827 / IM2).